We begin with the raw amino-acid sequence, 256 residues long: 1-(5-phosphoribosyl)-5-[(5-phosphoribosylamino)methylideneamino] imidazole-4-carboxamide isomerase (256 aa).

Catalysis depends on D8, which acts as the Proton acceptor. D129 acts as the Proton donor in catalysis.

It belongs to the HisA/HisF family.

It is found in the cytoplasm. It catalyses the reaction 1-(5-phospho-beta-D-ribosyl)-5-[(5-phospho-beta-D-ribosylamino)methylideneamino]imidazole-4-carboxamide = 5-[(5-phospho-1-deoxy-D-ribulos-1-ylimino)methylamino]-1-(5-phospho-beta-D-ribosyl)imidazole-4-carboxamide. It functions in the pathway amino-acid biosynthesis; L-histidine biosynthesis; L-histidine from 5-phospho-alpha-D-ribose 1-diphosphate: step 4/9. This chain is 1-(5-phosphoribosyl)-5-[(5-phosphoribosylamino)methylideneamino] imidazole-4-carboxamide isomerase, found in Synechococcus elongatus (strain ATCC 33912 / PCC 7942 / FACHB-805) (Anacystis nidulans R2).